Consider the following 92-residue polypeptide: Acyl-CoA-binding protein (92 aa).

One can recognise an ACB domain in the interval 3–88 (LKEDFEEHAE…VKQLLEAEAS (86 aa)). An acyl-CoA-binding positions include 30–34 (YGLYK), lysine 56, and tyrosine 75.

Belongs to the ACBP family.

Binds medium- and long-chain acyl-CoA esters with very high affinity and may function as an intracellular carrier of acyl-CoA esters. The chain is Acyl-CoA-binding protein from Brassica napus (Rape).